The chain runs to 215 residues: MOB kinase activator-like 1B (215 aa).

The disordered stretch occupies residues 1–29 (MSLFGLGSRNQKTFRPKKSAPTGSKGAQL). Zn(2+) is bound by residues C80, C85, H162, and H167.

This sequence belongs to the MOB1/phocein family. As to expression, constitutively expressed with higher expression in roots, flowers and pods than in leaves and stems.

The protein resides in the cytoplasm. The protein localises to the cytoskeleton. Its subcellular location is the phragmoplast. This Medicago sativa subsp. falcata (Sickle medic) protein is MOB kinase activator-like 1B.